The primary structure comprises 610 residues: Putative sensor histidine kinase NtrY-like (610 aa).

The next 4 membrane-spanning stretches (helical) occupy residues 18–38 (IGILVAIAIIFSYFTYYTISI), 49–69 (KVIWFLLIDLIIFLVLGILLT), 92–112 (IVVAFSLAAAIPTIIVSISSA), and 292–312 (IIFIFIALLLLLIAISFGVIV). Residues 314–368 (AKIVNPIKKLVIATDKVKSGDLTVQVPENEVDKDEIGTLYAAFNRMIKQLSRQQR) enclose the HAMP domain. The Histidine kinase domain maps to 385-596 (KVAHEIKNPL…VIDIRFNLEE (212 aa)). Position 388 is a phosphohistidine; by autocatalysis (H388).

It is found in the cell membrane. The catalysed reaction is ATP + protein L-histidine = ADP + protein N-phospho-L-histidine.. Member of the two-component regulatory system RBE_0470/RBE_0312. This chain is Putative sensor histidine kinase NtrY-like, found in Rickettsia bellii (strain RML369-C).